The chain runs to 101 residues: NADH-ubiquinone oxidoreductase chain 5 (101 aa).

Helical transmembrane passes span 12–32 (IALF…SGVI), 48–68 (FLFI…FICF), and 79–99 (LVIY…LFII).

It belongs to the complex I subunit 5 family.

It localises to the mitochondrion inner membrane. It carries out the reaction a ubiquinone + NADH + 5 H(+)(in) = a ubiquinol + NAD(+) + 4 H(+)(out). In terms of biological role, core subunit of the mitochondrial membrane respiratory chain NADH dehydrogenase (Complex I) that is believed to belong to the minimal assembly required for catalysis. Complex I functions in the transfer of electrons from NADH to the respiratory chain. The immediate electron acceptor for the enzyme is believed to be ubiquinone. The polypeptide is NADH-ubiquinone oxidoreductase chain 5 (ND5) (Leishmania tarentolae (Sauroleishmania tarentolae)).